The sequence spans 1492 residues: Condensin-2 complex subunit D3-L (1492 aa).

The disordered stretch occupies residues 152-201 (WPRDPNASRKRKKDTLKSSQGDNRGGRKRPRPPRRDEQEMEDLSEEEQDE). Over residues 189-201 (QEMEDLSEEEQDE) the composition is skewed to acidic residues. 3 HEAT repeats span residues 543 to 581 (SSDG…CHLI), 583 to 619 (CSSE…AQPH), and 621 to 659 (VLIQ…QSIT). 3 disordered regions span residues 1269–1345 (QLER…PRPR), 1359–1406 (RKAA…SLVG), and 1454–1492 (IMSP…KPSN). Over residues 1277-1290 (NVQNPPSAESTGSP) the composition is skewed to polar residues. Positions 1377 to 1388 (PSTPSPARTTSS) are enriched in low complexity.

As to quaternary structure, component of the condensin-2 complex, which contains the smc2 and smc4 heterodimer, and three non SMC subunits, ncapg2, ncaph2 and ncapd3 that probably regulate the complex.

The protein localises to the nucleus. Regulatory subunit of the condensin-2 complex, a complex which establishes mitotic chromosome architecture and is involved in physical rigidity of the chromatid axis. In Xenopus laevis (African clawed frog), this protein is Condensin-2 complex subunit D3-L.